The chain runs to 351 residues: Molybdenum import ATP-binding protein ModC (351 aa).

Residues 1–229 (MLKINVKKQL…PLFLPWKLED (229 aa)) form the ABC transporter domain. 31–38 (GLSGSGKT) lines the ATP pocket. Residues 289 to 351 (KTSIRNILHG…FAQIKAVSVL (63 aa)) enclose the Mop domain.

It belongs to the ABC transporter superfamily. Molybdate importer (TC 3.A.1.8) family. As to quaternary structure, the complex is composed of two ATP-binding proteins (ModC), two transmembrane proteins (ModB) and a solute-binding protein (ModA).

It localises to the cell inner membrane. The catalysed reaction is molybdate(out) + ATP + H2O = molybdate(in) + ADP + phosphate + H(+). Functionally, part of the ABC transporter complex ModABC involved in molybdenum import. Responsible for energy coupling to the transport system. This Pasteurella multocida (strain Pm70) protein is Molybdenum import ATP-binding protein ModC.